Here is a 308-residue protein sequence, read N- to C-terminus: N-acetyl-gamma-glutamyl-phosphate reductase (308 aa).

C117 is an active-site residue.

Belongs to the NAGSA dehydrogenase family. Type 2 subfamily.

It localises to the cytoplasm. The catalysed reaction is N-acetyl-L-glutamate 5-semialdehyde + phosphate + NADP(+) = N-acetyl-L-glutamyl 5-phosphate + NADPH + H(+). It participates in amino-acid biosynthesis; L-arginine biosynthesis; N(2)-acetyl-L-ornithine from L-glutamate: step 3/4. In terms of biological role, catalyzes the NADPH-dependent reduction of N-acetyl-5-glutamyl phosphate to yield N-acetyl-L-glutamate 5-semialdehyde. This Sinorhizobium fredii (strain NBRC 101917 / NGR234) protein is N-acetyl-gamma-glutamyl-phosphate reductase.